The primary structure comprises 1026 residues: MRFFALFIYRPVATILIAAAITLCGILGFRLLPVAPLPQVDFPVIMVRASLPGASPETMASSVATPLERSLGRIAGVNEMTSSSSLGSTRIILEFNFDRDINGAARDVQAAINAAQSLLPSGMPSRPTYRKANPSDAPIMILTLTSDSWSQGELYDFASTQLAQTIAQIDGVGDVDVGGSSLPAVRIGLNPQALFNQGVSLDEVRKAIDSANVRRPQGAIEDNVHRWQIQTNDELKTAAEYQPLIIHYKNGAAVRLDDVASVTDSVQDVRNAGMTNAKPAILLMIRKLPETNIIQTVDSIRAKLPELQAMIPAAIDLQIAQDRSPTIRASLQEVEETLAISVALVILVVFLFLRSGRATLIPAVAVPVSLISTFAAMYLCGFSLNNLSLMALTIATGFVVDDAIVVLENITRHLEAGMKPLQAALQGTQEVGFTVISMSLSLVAVFLPLLLMGGLPGRLLREFAVTLSVAIGISLVVSLTLTPMMCGWMLKSSKPRTQPRKRGVGRLLVALQQSYGTSLKWVLNHTRLVGVVFLGTIALNIWLYIAIPKTFFPEQDTGVLMGGIQADQSISFQAMRGKLQDFMKIIRDDPAVNNVTGFTGGSRVNSGMMFITLKPRGERKESAQQIIDRLRVKLTKEPGARLFLMAVQDIRIGGRQANASYQYTLLSDSLAALREWEPKIRKALSALPQLADINSDHQDNGAEMNLIYDRDTMSRLGIDVQAANSLLNNAFGQRQISTIYQPMNQYKVVMEVDPRYSQDISALEKMFVINHDGKAIPLSYFAQWRPANAPLSVNHQGLSAASTIAFNLPTGTSLSQATEAINRTMTQLGVPPTVRGSFAGTAQVFQQTMNSQLILIMAAIATVYIVLGILYESYVHPLTILSTLPSAGVGALLALELFNAPFSLIALIGIMLLIGIVKKNAIMMVDFALEAQRSGGLTPEQAIFQACLLRFRPIMMTTLAAMFGALPLVLSGGDGSELRQPLGITIVGGLVMSQLLTLYTTPVVYLFFDRLRLRFSRKNSKPVVEI.

Transmembrane regions (helical) follow at residues 15-35, 333-353, 360-380, 387-407, 431-451, 463-483, 528-548, 853-873, 897-917, 953-973, and 984-1004; these read ILIA…LPVA, EVEE…FLFL, LIPA…MYLC, LSLM…IVVL, VGFT…PLLL, FAVT…TLTP, LVGV…IAIP, LILI…LYES, LFNA…IGIV, PIMM…LSGG, and ITIV…TPVV.

The protein belongs to the resistance-nodulation-cell division (RND) (TC 2.A.6) family. MdtC subfamily. As to quaternary structure, part of a tripartite efflux system composed of MdtA, MdtB and MdtC. MdtC forms a heteromultimer with MdtB.

The protein resides in the cell inner membrane. This is Multidrug resistance protein MdtC from Salmonella arizonae (strain ATCC BAA-731 / CDC346-86 / RSK2980).